We begin with the raw amino-acid sequence, 257 residues long: Snake venom serine protease Dav-KN (257 aa).

The signal sequence occupies residues M1–A18. A propeptide spanning residues Q19 to L24 is cleaved from the precursor. The Peptidase S1 domain maps to V25–A248. 5 cysteine pairs are disulfide-bonded: C31–C162, C49–C65, C97–C255, C173–C188, and C199–C224. Active-site charge relay system residues include H64 and D109. The active-site Charge relay system is the S203.

It belongs to the peptidase S1 family. Snake venom subfamily. As to quaternary structure, monomer. As to expression, expressed by the venom gland.

The protein localises to the secreted. Snake venom serine protease that may act in the hemostasis system of the prey. This is Snake venom serine protease Dav-KN from Deinagkistrodon acutus (Hundred-pace snake).